The following is a 116-amino-acid chain: Urease subunit beta (116 aa).

Positions 97–116 (IQGPLDAGTAETAPGLPQQP) are disordered.

The protein belongs to the urease beta subunit family. In terms of assembly, heterotrimer of UreA (gamma), UreB (beta) and UreC (alpha) subunits. Three heterotrimers associate to form the active enzyme.

It localises to the cytoplasm. It catalyses the reaction urea + 2 H2O + H(+) = hydrogencarbonate + 2 NH4(+). Its pathway is nitrogen metabolism; urea degradation; CO(2) and NH(3) from urea (urease route): step 1/1. The polypeptide is Urease subunit beta (Paracidovorax citrulli (strain AAC00-1) (Acidovorax citrulli)).